A 483-amino-acid polypeptide reads, in one-letter code: Probable glycine dehydrogenase (decarboxylating) subunit 2 (483 aa).

Position 267 is an N6-(pyridoxal phosphate)lysine (Lys267).

Belongs to the GcvP family. C-terminal subunit subfamily. As to quaternary structure, the glycine cleavage system is composed of four proteins: P, T, L and H. In this organism, the P 'protein' is a heterodimer of two subunits. Pyridoxal 5'-phosphate is required as a cofactor.

The catalysed reaction is N(6)-[(R)-lipoyl]-L-lysyl-[glycine-cleavage complex H protein] + glycine + H(+) = N(6)-[(R)-S(8)-aminomethyldihydrolipoyl]-L-lysyl-[glycine-cleavage complex H protein] + CO2. Its function is as follows. The glycine cleavage system catalyzes the degradation of glycine. The P protein binds the alpha-amino group of glycine through its pyridoxal phosphate cofactor; CO(2) is released and the remaining methylamine moiety is then transferred to the lipoamide cofactor of the H protein. This is Probable glycine dehydrogenase (decarboxylating) subunit 2 from Kosmotoga olearia (strain ATCC BAA-1733 / DSM 21960 / TBF 19.5.1).